The sequence spans 520 residues: Cilia- and flagella-associated protein 157 (520 aa).

Residues 1–22 (MAPKKSVSKAGKELEVKKKGGK) form a disordered region. The segment covering 10-22 (AGKELEVKKKGGK) has biased composition (basic and acidic residues). Coiled-coil stretches lie at residues 33 to 189 (LAKE…LEKK) and 236 to 372 (LQMA…QATS). Residues 416 to 453 (PQKAACPHQESQSHGPPKESRPSIQLPRTGSLLPQLSD) form a disordered region. Polar residues predominate over residues 437–453 (PSIQLPRTGSLLPQLSD).

The protein belongs to the CFAP157 family. As to quaternary structure, interacts with TUBB and TUBA4A. Interacts with CEP350.

It is found in the cytoplasm. The protein localises to the cytoskeleton. The protein resides in the cilium basal body. Specifically required during spermatogenesis for flagellum morphogenesis and sperm motility. May be required to suppress the formation of supernumerary axonemes and ensure a correct ultrastructure. This is Cilia- and flagella-associated protein 157 from Homo sapiens (Human).